A 347-amino-acid polypeptide reads, in one-letter code: MTVSANGRRMLRIEAKNSQTPIEAKPRWIRTTAKMGPEYRDMKNRVTGMSLHTVCQEAGCPNIHECWEDREASFLIGGDTCSRRCDFCQIKSGKPTPLDRDEPRRVAESVREMGLKYATVTGVTRDDLDDEGAWLYAEVVRKIHELNPNTGVENLTPDFSNKPELLQIVFESQPEVFAHNLETVPRIFKRIRPAFKYERSLEVIRAAHDYGLITKSNLILGMGETEEEVVEAMRDLREAGTDILTITQYLRPTSMHHPIERWVRPEEFVAHSEAAYDMGFPAVMSGPLVRSSYRSGRLYAQAMRARGREIPENLSHLNEKLDGSTQQEATNLLDKYGASEETPVAYR.

[4Fe-4S] cluster is bound by residues Cys55, Cys60, Cys66, Cys81, Cys85, Cys88, and Ser292. The Radical SAM core domain maps to 67–281 (WEDREASFLI…SEAAYDMGFP (215 aa)).

This sequence belongs to the radical SAM superfamily. Lipoyl synthase family. The cofactor is [4Fe-4S] cluster.

Its subcellular location is the cytoplasm. The catalysed reaction is [[Fe-S] cluster scaffold protein carrying a second [4Fe-4S](2+) cluster] + N(6)-octanoyl-L-lysyl-[protein] + 2 oxidized [2Fe-2S]-[ferredoxin] + 2 S-adenosyl-L-methionine + 4 H(+) = [[Fe-S] cluster scaffold protein] + N(6)-[(R)-dihydrolipoyl]-L-lysyl-[protein] + 4 Fe(3+) + 2 hydrogen sulfide + 2 5'-deoxyadenosine + 2 L-methionine + 2 reduced [2Fe-2S]-[ferredoxin]. The protein operates within protein modification; protein lipoylation via endogenous pathway; protein N(6)-(lipoyl)lysine from octanoyl-[acyl-carrier-protein]: step 2/2. Its function is as follows. Catalyzes the radical-mediated insertion of two sulfur atoms into the C-6 and C-8 positions of the octanoyl moiety bound to the lipoyl domains of lipoate-dependent enzymes, thereby converting the octanoylated domains into lipoylated derivatives. The chain is Lipoyl synthase from Corynebacterium urealyticum (strain ATCC 43042 / DSM 7109).